Reading from the N-terminus, the 99-residue chain is MNTIQVIIFAVVLVLTVTVGQADEDSAETSLLRKLKEAEASLFGQHLEESQHSREKRCLGENVPCDKDRPNCCSRYECLEPTGYGWWYASYYCYKKRSG.

Residues 1–22 (MNTIQVIIFAVVLVLTVTVGQA) form the signal peptide. Residues 23-57 (DEDSAETSLLRKLKEAEASLFGQHLEESQHSREKR) constitute a propeptide that is removed on maturation. Intrachain disulfides connect cysteine 58–cysteine 73, cysteine 65–cysteine 78, and cysteine 72–cysteine 93. Position 98 is a serine amide (serine 98).

The protein belongs to the neurotoxin 14 (magi-1) family. 08 (Ltx-4) subfamily. Expressed by the venom gland.

The protein localises to the secreted. Its function is as follows. Insecticidal toxin that shows strong lethal effects on American cockroaches (P.americana) and common mealbeetle (T.molitor). Possibly acts by blocking ion channel currents. Also shows significant analgesic effects in mice models of pain including abdominal writhing induced by acetic acid and formalin-induced paw licking tests. In addition, exerts marked inhibition of proliferation of some human tumor cell lines including C8166, Molt-4, A-549, BIU-87, T24, and Calu-6. The polypeptide is U1-theraphotoxin-Tal1a (Tliltocatl albopilosus (Curlyhair tarantula)).